Consider the following 161-residue polypeptide: Ureidoglycolate lyase (161 aa).

This sequence belongs to the ureidoglycolate lyase family. As to quaternary structure, homodimer. It depends on Ni(2+) as a cofactor.

The enzyme catalyses (S)-ureidoglycolate = urea + glyoxylate. The protein operates within nitrogen metabolism; (S)-allantoin degradation. Catalyzes the catabolism of the allantoin degradation intermediate (S)-ureidoglycolate, generating urea and glyoxylate. Involved in the utilization of allantoin as nitrogen source. In Rhodobacter capsulatus (strain ATCC BAA-309 / NBRC 16581 / SB1003), this protein is Ureidoglycolate lyase.